Reading from the N-terminus, the 1828-residue chain is InaD-like protein (1828 aa).

One can recognise an L27 domain in the interval 5 to 65; that stretch reads PAPDKLQVLQ…SIKQLKGQLS (61 aa). 3 PDZ domains span residues 134–221, 248–328, and 365–453; these read YIDI…AREP, DVEL…ARDP, and GVEL…VRRK. Residues Ser-459 and Ser-522 each carry the phosphoserine modification. The region spanning 553-639 is the PDZ 4 domain; the sequence is DAELQKYSKL…PFTLVCCRRL (87 aa). A Phosphoserine modification is found at Ser-645. PDZ domains follow at residues 686–758 and 1070–1162; these read IVEL…EVLK and IVEI…QSLS. The disordered stretch occupies residues 1168–1220; it reads IPSVHNKANKIANNQDQNTEEKKEKRQGTPPPPMKLPPPYKAPSDDSDENEEE. Residues 1196-1208 show a composition bias toward pro residues; sequence TPPPPMKLPPPYK. Ser-1211 bears the Phosphoserine mark. In terms of domain architecture, PDZ 7 spans 1241–1324; the sequence is IIELEKDKNG…KVKLVFIRNE (84 aa). The segment at 1333 to 1362 is disordered; it reads APFPVPSSSPSSLEDQSGTEPVSSEEDGSL. Over residues 1345–1354 the composition is skewed to polar residues; it reads LEDQSGTEPV. PDZ domains follow at residues 1464-1547 and 1560-1642; these read IIEI…YRDE and PVDL…GRLR. Phosphothreonine is present on Thr-1535. The span at 1645-1668 shows a compositional bias: polar residues; the sequence is SWTSSRKTSQNSQGSQHSTHSSFH. Residues 1645–1669 form a disordered region; the sequence is SWTSSRKTSQNSQGSQHSTHSSFHP. Positions 1703–1789 constitute a PDZ 10 domain; it reads TVEIIRELSD…RIILQVVADT (87 aa). The segment at 1805–1828 is disordered; sequence YHLGSPTAEHHPEDTEEPLQMTAG.

As to quaternary structure, forms a ternary complex with PALS1 and CRB1. Component of a complex whose core is composed of ARHGAP17, AMOT, PALS1, INADL/PATJ and PARD3/PAR3. Forms a heterotrimeric complex composed of MMP5, LIN7B and PATJ; the N-terminal L27 domain of PALS1 interacts with the L27 domain of PATJ and the C-terminal L27 domain of PALS1 interacts with the L27 domain of LIN7B. Component of a complex composed of CRB3, PALS1 and PATJ. As part of the Crumbs complex; interacts with WWP1, the interaction is enhanced by AMOTL2 and facilitates WWP1 localization to the plasma membrane. The Crumbs complex promotes monoubiquitination of AMOTL2 by WWP1, which activates the Hippo signaling pathway. Interacts (via N-terminus) with PALS1/PALS (via PDZ domain). Interacts with TJP3/ZO-3 and CLDN1/claudin-1. Interacts with ASIC3, KCNJ10, KCNJ15, GRIN2A, GRIN2B, GRIN2C, GRIN2D, NLGN2, and HTR2A. Interacts with MPP7. Directly interacts with HTR4. Interacts (via PDZ domain 8) with WWC1 (via the ADDV motif). Interacts with SLC6A4. Interacts (via C-terminus) with ARHGEF18. Interacts with NPHP1. Interacts with PARD3/PAR3. Interacts (via PDZ1-6 domains) with TJP1/ZO1; the interaction is required for attachment and extension of TJP1/ZO1 condensates along the apical cell interface.

The protein resides in the cell junction. Its subcellular location is the tight junction. It localises to the apical cell membrane. It is found in the cytoplasm. The protein localises to the perinuclear region. Its function is as follows. Scaffolding protein that facilitates the localization of proteins to the cell membrane. Required for the correct formation of tight junctions and epithelial apico-basal polarity. Acts (via its L27 domain) as an apical connector and elongation factor for multistranded TJP1/ZO1 condensates that form a tight junction belt, thereby required for the formation of the tight junction-mediated cell barrier. Positively regulates epithelial cell microtubule elongation and cell migration, possibly via facilitating localization of PRKCI/aPKC and PAR3D/PAR3 at the leading edge of migrating cells. Plays a role in the correct reorientation of the microtubule-organizing center during epithelial migration. May regulate the surface expression and/or function of ASIC3 in sensory neurons. May recruit ARHGEF18 to apical cell-cell boundaries. In Canis lupus familiaris (Dog), this protein is InaD-like protein.